Consider the following 220-residue polypeptide: Deoxyribose-phosphate aldolase 2 (220 aa).

Catalysis depends on Asp-89, which acts as the Proton donor/acceptor. The active-site Schiff-base intermediate with acetaldehyde is the Lys-151. Lys-180 acts as the Proton donor/acceptor in catalysis.

This sequence belongs to the DeoC/FbaB aldolase family. DeoC type 1 subfamily.

Its subcellular location is the cytoplasm. It catalyses the reaction 2-deoxy-D-ribose 5-phosphate = D-glyceraldehyde 3-phosphate + acetaldehyde. The protein operates within carbohydrate degradation; 2-deoxy-D-ribose 1-phosphate degradation; D-glyceraldehyde 3-phosphate and acetaldehyde from 2-deoxy-alpha-D-ribose 1-phosphate: step 2/2. In terms of biological role, catalyzes a reversible aldol reaction between acetaldehyde and D-glyceraldehyde 3-phosphate to generate 2-deoxy-D-ribose 5-phosphate. This Staphylococcus aureus (strain COL) protein is Deoxyribose-phosphate aldolase 2.